Consider the following 195-residue polypeptide: U8 snoRNA-decapping enzyme (195 aa).

The region spanning 18–168 is the Nudix hydrolase domain; sequence GWRHACHALL…LENTFIGNAR (151 aa). Residues His24, Arg50, and Phe57 each coordinate substrate. Residues Gly59, Glu76, Glu80, and His99 each coordinate Mn(2+). The Nudix box signature appears at 61–82; it reads FVDLRDGSLEDGLNRELGEELG. Positions 166 and 170 each coordinate substrate. Residue Glu173 coordinates Mn(2+).

This sequence belongs to the Nudix hydrolase family. NUDT16 subfamily. In terms of assembly, homodimer. Mg(2+) serves as cofactor. Requires Mn(2+) as cofactor. Co(2+) is required as a cofactor.

The protein resides in the nucleus. It localises to the nucleolus. The protein localises to the nucleoplasm. It is found in the cytoplasm. It carries out the reaction a 5'-end (N(7)-methyl 5'-triphosphoguanosine)-ribonucleoside in mRNA + H2O = N(7)-methyl-GDP + a 5'-end phospho-ribonucleoside in mRNA + 2 H(+). The enzyme catalyses IDP + H2O = IMP + phosphate + H(+). The catalysed reaction is dIDP + H2O = dIMP + phosphate + H(+). It catalyses the reaction a 5'-end NAD(+)-phospho-ribonucleoside in mRNA + H2O = a 5'-end phospho-ribonucleoside in mRNA + NAD(+) + H(+). It carries out the reaction a 5'-end FAD-phospho-ribonucleoside in mRNA + H2O = a 5'-end phospho-adenosine-phospho-ribonucleoside in mRNA + FMN + 2 H(+). The enzyme catalyses a 5'-end CoA-ribonucleoside in mRNA + H2O = a 5'-end phospho-adenosine-phospho-ribonucleoside in mRNA + (R)-4'-phosphopantetheine + 2 H(+). RNA-binding and decapping enzyme that catalyzes the cleavage of the cap structure of snoRNAs and mRNAs in a metal-dependent manner. Part of the U8 snoRNP complex that is required for the accumulation of mature 5.8S and 28S rRNA. Has diphosphatase activity and removes m7G and/or m227G caps from U8 snoRNA and leaves a 5'monophosphate on the RNA. Also catalyzes the cleavage of the cap structure on mRNAs. Does not hydrolyze cap analog structures like 7-methylguanosine nucleoside triphosphate (m7GpppG). Also hydrolysis m7G- and m227G U3-capped RNAs but with less efficiencies. Has broad substrate specificity with manganese or cobalt as cofactor and can act on various RNA species. Binds to the U8 snoRNA; metal is not required for RNA-binding. May play a role in the regulation of snoRNAs and mRNAs degradation. Also acts as a phosphatase; hydrolyzes the non-canonical purine nucleotides inosine diphosphate (IDP) and deoxyinosine diphosphate (dITP) as well as guanosine diphosphate (GDP), deoxyguanosine diphosphate (dGDP), xanthine diphosphate (XDP), inosine triphosphate (ITP) and deoxyinosine triphosphate (ITP) to their respective monophosphate derivatives and does not distinguish between the deoxy- and ribose forms. The order of activity with different substrates is IDP &gt; dIDP &gt;&gt; GDP = dGDP &gt; XDP = ITP = dITP. Binds strongly to GTP, ITP and XTP. Participates in the hydrolysis of dIDP/IDP and probably excludes non-canonical purines from RNA and DNA precursor pools, thus preventing their incorporation into RNA and DNA and avoiding chromosomal lesions. Exhibits decapping activity towards NAD-capped RNAs and FAD-capped RNAs. Exhibits decapping activity towards dpCoA-capped RNAs in vitro. The chain is U8 snoRNA-decapping enzyme (NUDT16) from Bos taurus (Bovine).